An 87-amino-acid polypeptide reads, in one-letter code: Small ribosomal subunit protein uS17 (87 aa).

This sequence belongs to the universal ribosomal protein uS17 family. Part of the 30S ribosomal subunit.

One of the primary rRNA binding proteins, it binds specifically to the 5'-end of 16S ribosomal RNA. The polypeptide is Small ribosomal subunit protein uS17 (Geobacillus stearothermophilus (Bacillus stearothermophilus)).